We begin with the raw amino-acid sequence, 294 residues long: ATP synthase gamma chain (294 aa).

It belongs to the ATPase gamma chain family. In terms of assembly, F-type ATPases have 2 components, CF(1) - the catalytic core - and CF(0) - the membrane proton channel. CF(1) has five subunits: alpha(3), beta(3), gamma(1), delta(1), epsilon(1). CF(0) has three main subunits: a, b and c.

It localises to the cell inner membrane. Produces ATP from ADP in the presence of a proton gradient across the membrane. The gamma chain is believed to be important in regulating ATPase activity and the flow of protons through the CF(0) complex. The protein is ATP synthase gamma chain of Nitrosomonas eutropha (strain DSM 101675 / C91 / Nm57).